We begin with the raw amino-acid sequence, 238 residues long: Endo-chitosanase (238 aa).

The N-terminal stretch at Met-1–Ala-17 is a signal peptide. Asn-83 is a glycosylation site (N-linked (GlcNAc...) asparagine).

Belongs to the glycosyl hydrolase 75 family.

Its subcellular location is the secreted. The enzyme catalyses Endohydrolysis of beta-(1-&gt;4)-linkages between D-glucosamine residues in a partly acetylated chitosan.. Chitosanase catalyzing the endo-type cleavage of chitosan, the deacylated form of chitin. Chitosanase may be crucial in the degradation of the deacetylated portion of chitin in the fungal cell wall. Chitoolisaccharides produced by the hydrolysis of partially N-acetylated chitosan are known to have many biological activities, including antibacterial activity, immune-enhancing effects, and elicitor activity. The chitosans with higher degrees of deacetylation were shown to be the better substrates. Chitodimer, chitotrimer, and chitotetramer are the major products but monoacetyl chitodimer, monoacetyl chitotrimer, and monoacetyl chitotetramer are also produced. In Aspergillus fumigatus (Neosartorya fumigata), this protein is Endo-chitosanase (csn).